We begin with the raw amino-acid sequence, 272 residues long: Large ribosomal subunit protein uL2cz/uL2cy (272 aa).

The span at 1–13 shows a compositional bias: polar residues; the sequence is MHLYKTSTPSTRN. 2 disordered regions span residues 1 to 27 and 222 to 272; these read MHLY…PRNN and NPVD…RRSK.

This sequence belongs to the universal ribosomal protein uL2 family. As to quaternary structure, part of the 50S ribosomal subunit.

Its subcellular location is the plastid. It localises to the chloroplast. This chain is Large ribosomal subunit protein uL2cz/uL2cy (rpl2-A), found in Buxus microphylla (Littleleaf boxwood).